The chain runs to 156 residues: ATP synthase subunit b (156 aa).

The helical transmembrane segment at 7 to 27 (IFFQMLVFFVLGWFTMKFVWP) threads the bilayer.

It belongs to the ATPase B chain family. As to quaternary structure, F-type ATPases have 2 components, F(1) - the catalytic core - and F(0) - the membrane proton channel. F(1) has five subunits: alpha(3), beta(3), gamma(1), delta(1), epsilon(1). F(0) has three main subunits: a(1), b(2) and c(10-14). The alpha and beta chains form an alternating ring which encloses part of the gamma chain. F(1) is attached to F(0) by a central stalk formed by the gamma and epsilon chains, while a peripheral stalk is formed by the delta and b chains.

Its subcellular location is the cell inner membrane. In terms of biological role, f(1)F(0) ATP synthase produces ATP from ADP in the presence of a proton or sodium gradient. F-type ATPases consist of two structural domains, F(1) containing the extramembraneous catalytic core and F(0) containing the membrane proton channel, linked together by a central stalk and a peripheral stalk. During catalysis, ATP synthesis in the catalytic domain of F(1) is coupled via a rotary mechanism of the central stalk subunits to proton translocation. Its function is as follows. Component of the F(0) channel, it forms part of the peripheral stalk, linking F(1) to F(0). The sequence is that of ATP synthase subunit b from Bordetella pertussis (strain Tohama I / ATCC BAA-589 / NCTC 13251).